The following is a 211-amino-acid chain: Large ribosomal subunit protein eL13 (211 aa).

Lys-16 carries the N6-acetyllysine modification. Phosphoserine is present on residues Ser-52, Ser-77, and Ser-106. Glycyl lysine isopeptide (Lys-Gly) (interchain with G-Cter in SUMO2) cross-links involve residues Lys-123 and Lys-145. Residue Lys-174 forms a Glycyl lysine isopeptide (Lys-Gly) (interchain with G-Cter in SUMO1); alternate linkage. Glycyl lysine isopeptide (Lys-Gly) (interchain with G-Cter in SUMO2); alternate cross-links involve residues Lys-174 and Lys-177. Lys-177 carries the post-translational modification N6-acetyllysine; alternate.

Belongs to the eukaryotic ribosomal protein eL13 family. As to quaternary structure, component of the 60S large ribosomal subunit (LSU). In terms of tissue distribution, higher levels of expression in benign breast lesions than in carcinomas.

Its subcellular location is the cytoplasm. In terms of biological role, component of the ribosome, a large ribonucleoprotein complex responsible for the synthesis of proteins in the cell. The small ribosomal subunit (SSU) binds messenger RNAs (mRNAs) and translates the encoded message by selecting cognate aminoacyl-transfer RNA (tRNA) molecules. The large subunit (LSU) contains the ribosomal catalytic site termed the peptidyl transferase center (PTC), which catalyzes the formation of peptide bonds, thereby polymerizing the amino acids delivered by tRNAs into a polypeptide chain. The nascent polypeptides leave the ribosome through a tunnel in the LSU and interact with protein factors that function in enzymatic processing, targeting, and the membrane insertion of nascent chains at the exit of the ribosomal tunnel. As part of the LSU, it is probably required for its formation and the maturation of rRNAs. Plays a role in bone development. This chain is Large ribosomal subunit protein eL13 (RPL13), found in Homo sapiens (Human).